The chain runs to 153 residues: Large ribosomal subunit protein uL30 (153 aa).

It belongs to the universal ribosomal protein uL30 family. As to quaternary structure, part of the 50S ribosomal subunit.

This chain is Large ribosomal subunit protein uL30, found in Methanoculleus marisnigri (strain ATCC 35101 / DSM 1498 / JR1).